The primary structure comprises 637 residues: DNA damage-binding protein CMR1 (637 aa).

2 disordered regions span residues 1–91 (MIES…EEEA) and 144–168 (LVDTKDENKRRSANKPDPQFSTERR). Composition is skewed to basic and acidic residues over residues 8–23 (EQERLKNIRENERLMK) and 74–91 (AGHEADSETLKRKYEEEA). WD repeat units follow at residues 185 to 226 (VTPK…FASN), 255 to 295 (HARS…SEEI), 297 to 321 (AGEEDVLLSIFDVLSPSTHPSVYMD), 361 to 401 (VCEK…SVVK), and 431 to 470 (KARQACTSVDFSPRGDQLVGVSYDDVVKVWSMEPGSLFSE). 2 disordered regions span residues 482–508 (SNKPKGAVKKQVPDSASDTGPGLLSWL) and 525–549 (KQEQDAPSPSLSKRPDDVLANPTRI). WD repeat units lie at residues 556–598 (GKWL…LRSL) and 602–637 (NLVTAVPAVTCMHPVLPARLVTGNASGRCTFWSPDP).

It belongs to the WD repeat DDB2/WDR76 family.

In terms of biological role, DNA-binding protein that binds to both single- and double-stranded DNA. Binds preferentially to UV-damaged DNA. May be involved in DNA-metabolic processes. This Mycosarcoma maydis (Corn smut fungus) protein is DNA damage-binding protein CMR1.